The chain runs to 68 residues: DNA gyrase inhibitor YacG (68 aa).

The Zn(2+) site is built by Cys10, Cys13, Cys29, and Cys33.

The protein belongs to the DNA gyrase inhibitor YacG family. Interacts with GyrB. Requires Zn(2+) as cofactor.

In terms of biological role, inhibits all the catalytic activities of DNA gyrase by preventing its interaction with DNA. Acts by binding directly to the C-terminal domain of GyrB, which probably disrupts DNA binding by the gyrase. This is DNA gyrase inhibitor YacG from Haemophilus influenzae (strain PittGG).